The primary structure comprises 152 residues: Nucleoside diphosphate kinase (152 aa).

Lys11, Phe59, Arg87, Thr93, Arg104, and Asn114 together coordinate ATP. The active-site Pros-phosphohistidine intermediate is His117.

It belongs to the NDK family. Homotetramer. Requires Mg(2+) as cofactor.

Its subcellular location is the cytoplasm. It catalyses the reaction dZDP + ATP = dZTP + ADP. It carries out the reaction a 2'-deoxyribonucleoside 5'-diphosphate + ATP = a 2'-deoxyribonucleoside 5'-triphosphate + ADP. The catalysed reaction is a ribonucleoside 5'-diphosphate + ATP = a ribonucleoside 5'-triphosphate + ADP. It functions in the pathway purine metabolism. In terms of biological role, major role in the synthesis of nucleoside triphosphates other than ATP. The ATP gamma phosphate is transferred to the NDP beta phosphate via a ping-pong mechanism, using a phosphorylated active-site intermediate. Its function is as follows. (Microbial infection) Catalyzes the phosphorylation of dZDP to dZTP, when the bacterium is infected by a phage that produces the substrate for the synthesis of dZTP (2- amino-2'-deoxyadenosine 5'-triphosphate), which is then used by the phage as a DNA polymerase substrate. The sequence is that of Nucleoside diphosphate kinase from Synechococcus sp. (strain WH7803).